The following is a 154-amino-acid chain: MFGADKGTADKLDGKKLHIGIVQARFNENITNTLAAACRAELLRLGVQEKHIRHVLVPGALEVPVALQAMAERDEYDALIALGCIIRGETYHFELVANESGAGVTRLALDYQVPIANAIITTENLEQALARQTEKGVDAARVAVEMANLLEELS.

5-amino-6-(D-ribitylamino)uracil contacts are provided by residues phenylalanine 26, 60 to 62, and 84 to 86; these read ALE and CII. 89–90 provides a ligand contact to (2S)-2-hydroxy-3-oxobutyl phosphate; the sequence is ET. The active-site Proton donor is histidine 92. Asparagine 117 contacts 5-amino-6-(D-ribitylamino)uracil. Arginine 131 provides a ligand contact to (2S)-2-hydroxy-3-oxobutyl phosphate.

Belongs to the DMRL synthase family.

The enzyme catalyses (2S)-2-hydroxy-3-oxobutyl phosphate + 5-amino-6-(D-ribitylamino)uracil = 6,7-dimethyl-8-(1-D-ribityl)lumazine + phosphate + 2 H2O + H(+). It participates in cofactor biosynthesis; riboflavin biosynthesis; riboflavin from 2-hydroxy-3-oxobutyl phosphate and 5-amino-6-(D-ribitylamino)uracil: step 1/2. In terms of biological role, catalyzes the formation of 6,7-dimethyl-8-ribityllumazine by condensation of 5-amino-6-(D-ribitylamino)uracil with 3,4-dihydroxy-2-butanone 4-phosphate. This is the penultimate step in the biosynthesis of riboflavin. The sequence is that of 6,7-dimethyl-8-ribityllumazine synthase from Acidovorax sp. (strain JS42).